Consider the following 1017-residue polypeptide: MDEKTIKKSILSSSNDEKIIYKSRIKKFQKNHKFYIILLVFIAILQFISIAFFTRGFLLSRHVLDNISSQNETSKLPPRFNKAVILVIDALRFDFAIPVNESHSNYNLNYHNNILSLYDSFASDKDASSLLLKFIADPPTTTLQRLKGLTTGSLPTFIDAGSNFDGTVIEEDNFLKQLHLANKTVKFAGDDTWMALFHPFLSNDSFPLESLNVWDLDTVDNGVMDYFHDHLQQDKEWDVMIGHMLGIDHVGHKYGPDHFTMREKQIQVDQFIDWILKSIDDDTLLVILGDHGMDHTGNHGGDSIDELESTLFLYSKKPDMWRLKETSNYNIDNLGHDYRSVRQIDLVSSLALLMGQPIPFNNLGWPIDEIARNDREWSQFVNSAISQLQLYKDTMQIHHGNDEILEPLAKNISNTPPTSDPEKFVKLGHKYQKVFLQTCEELWAKFDYYSIATGITLLATSLVLLISITKLIPSIVVNQMVPEFVPGIIIMVLVTNLCFHGIFYVYQQPSFVDQFWGTLLATAIGIIIGCYITIFDRYNFIWIAMRLGETLADYWSRIAVMFMIIHALLFTSNSFTIWEDRIVAFLLSTFGMLTLYEFVFLPKRQSTTALLTATISEKEGTTSGVNPSTANSNYLPLTRFARLLGGYHSAVLIIFTRLASMITICREEQGEYCIPTFNNQNNSSWWVLGLCFLMIFILPACITGYYNLTSSYQAAAPIWINVFLKGILGLNFVYWSLTSLENNSAVIAIPFLRDVTIFKFTLARIIAGFSLIASNVGWLMGPLCIKLNIHNTDVKSHEATILGYTNIYGSEFFLLVINVLISILLFNKPLAQLSYFLMCNQLLSILEIIDLLKLKENIIGPIALGLLSYQHFFTTGHQATIPSVQWDIGFMLSEKVTFPFTQIAIILNTFGPHILVSLSVALLTLWSQPPDVLKPQTLLGRIVSNCGILLTYNTILCLSSFIWVTHFRRHLMVWKIFCPRFIFASLSLIVTQLVVTFGTIAFASGRLIKHINDIFWK.

Residues 34 to 54 (FYIILLVFIAILQFISIAFFT) traverse the membrane as a helical segment. 5 N-linked (GlcNAc...) asparagine glycosylation sites follow: Asn66, Asn71, Asn100, Asn182, and Asn203. Residues 347–367 (VSSLALLMGQPIPFNNLGWPI) form a helical membrane-spanning segment. Asn411 carries an N-linked (GlcNAc...) asparagine glycan. Transmembrane regions (helical) follow at residues 457–477 (LLAT…SIVV), 484–504 (FVPG…GIFY), 515–535 (FWGT…ITIF), 558–578 (IAVM…FTIW), 582–602 (IVAF…VFLP), and 644–664 (LGGY…MITI). N-linked (GlcNAc...) asparagine glycosylation is found at Asn681 and Asn682. Residues 685–705 (WWVLGLCFLMIFILPACITGY) traverse the membrane as a helical segment. Residue Asn707 is glycosylated (N-linked (GlcNAc...) asparagine). Residues 715-735 (AAPIWINVFLKGILGLNFVYW) traverse the membrane as a helical segment. N-linked (GlcNAc...) asparagine glycosylation occurs at Asn742. Transmembrane regions (helical) follow at residues 765–785 (IIAG…PLCI), 806–826 (NIYG…ILLF), 829–849 (PLAQ…LEII), 903–923 (IAII…VALL), 947–967 (GILL…VTHF), and 981–1001 (FIFA…GTIA).

The protein belongs to the PIGG/PIGN/PIGO family. PIGO subfamily. In terms of processing, glycosylated.

Its subcellular location is the endoplasmic reticulum membrane. The protein operates within glycolipid biosynthesis; glycosylphosphatidylinositol-anchor biosynthesis. Involved in glycosylphosphatidylinositol-anchor biosynthesis. Transfers ethanolamine phosphate to the GPI third mannose which links the GPI-anchor to the C-terminus of the proteins by an amide bond. Involved in cell wall biosynthesis. The chain is GPI ethanolamine phosphate transferase 3 (GPI13) from Saccharomyces cerevisiae (strain ATCC 204508 / S288c) (Baker's yeast).